A 510-amino-acid polypeptide reads, in one-letter code: ATP synthase subunit alpha (510 aa).

169-176 (GDRQTGKT) contributes to the ATP binding site.

The protein belongs to the ATPase alpha/beta chains family. In terms of assembly, F-type ATPases have 2 components, CF(1) - the catalytic core - and CF(0) - the membrane proton channel. CF(1) has five subunits: alpha(3), beta(3), gamma(1), delta(1), epsilon(1). CF(0) has four main subunits: a(1), b(1), b'(1) and c(9-12).

It is found in the cell inner membrane. It catalyses the reaction ATP + H2O + 4 H(+)(in) = ADP + phosphate + 5 H(+)(out). Its function is as follows. Produces ATP from ADP in the presence of a proton gradient across the membrane. The alpha chain is a regulatory subunit. In Rhodospirillum rubrum (strain ATCC 11170 / ATH 1.1.1 / DSM 467 / LMG 4362 / NCIMB 8255 / S1), this protein is ATP synthase subunit alpha.